Reading from the N-terminus, the 420-residue chain is UDP-N-acetylglucosamine 1-carboxyvinyltransferase (420 aa).

Phosphoenolpyruvate is bound at residue 22 to 23; that stretch reads KN. Arginine 92 provides a ligand contact to UDP-N-acetyl-alpha-D-glucosamine. Cysteine 116 functions as the Proton donor in the catalytic mechanism. Cysteine 116 is modified (2-(S-cysteinyl)pyruvic acid O-phosphothioketal). Residues 121–125, 161–164, aspartate 306, and isoleucine 328 each bind UDP-N-acetyl-alpha-D-glucosamine; these read RPVDL and KVSV.

The protein belongs to the EPSP synthase family. MurA subfamily.

It is found in the cytoplasm. The catalysed reaction is phosphoenolpyruvate + UDP-N-acetyl-alpha-D-glucosamine = UDP-N-acetyl-3-O-(1-carboxyvinyl)-alpha-D-glucosamine + phosphate. It functions in the pathway cell wall biogenesis; peptidoglycan biosynthesis. Functionally, cell wall formation. Adds enolpyruvyl to UDP-N-acetylglucosamine. The protein is UDP-N-acetylglucosamine 1-carboxyvinyltransferase of Yersinia pseudotuberculosis serotype O:1b (strain IP 31758).